Consider the following 277-residue polypeptide: Homeobox protein Nkx-6.2 (277 aa).

The tract at residues 89–142 is repressor domain; the sequence is AGVYFGPAAAVARGYPKPLAELPGRPPIFWPGVVQGAPWRDPRLAGPAPAGGVL. Disordered stretches follow at residues 132 to 155 and 210 to 250; these read LAGPAPAGGVLDKDGKKKHSRPTF and EMAS…DDEK. Positions 148-207 form a DNA-binding region, homeobox; sequence KKHSRPTFSGQQIFALEKTFEQTKYLAGPERARLAYSLGMTESQVKVWFQNRRTKWRKRH. Positions 216 to 226 are enriched in basic and acidic residues; the sequence is KKQDSDAEKLK.

Highest expression in brain.

Its subcellular location is the nucleus. In terms of biological role, transcription factor with repressor activity involved in the regulation of axon-glial interactions at myelin paranodes in oligodendrocytes. Binds to the consensus DNA sequence 5'-(A/T)TTAATGA-3'. In oligodendrocytes, binds to MBP and PLP1 promoter regions. The sequence is that of Homeobox protein Nkx-6.2 (NKX6-2) from Homo sapiens (Human).